Reading from the N-terminus, the 156-residue chain is MKLNDLRDKPGSVKARKRVGRGIGSGTGKTGGRGVKGQKSRSGVSINGFEGGQMPIYRRLPKRGFTNIFAKSFNVVSLGRIQAAIDAGKLDAKAVVNLDSLKAAGVIRRAKDGVRILSDGELKAKVAFEVAGASKAAVEKIEKAGGSIKLPEAAAE.

Residues 1 to 11 (MKLNDLRDKPG) are compositionally biased toward basic and acidic residues. Residues 1-44 (MKLNDLRDKPGSVKARKRVGRGIGSGTGKTGGRGVKGQKSRSGV) form a disordered region. The segment covering 21–35 (RGIGSGTGKTGGRGV) has biased composition (gly residues).

It belongs to the universal ribosomal protein uL15 family. As to quaternary structure, part of the 50S ribosomal subunit.

Binds to the 23S rRNA. This chain is Large ribosomal subunit protein uL15, found in Brucella abortus (strain S19).